The chain runs to 298 residues: UDP-3-O-acyl-N-acetylglucosamine deacetylase (298 aa).

Residues His79, His239, and Asp243 each contribute to the Zn(2+) site. The active-site Proton donor is the His266.

The protein belongs to the LpxC family. Requires Zn(2+) as cofactor.

It catalyses the reaction a UDP-3-O-[(3R)-3-hydroxyacyl]-N-acetyl-alpha-D-glucosamine + H2O = a UDP-3-O-[(3R)-3-hydroxyacyl]-alpha-D-glucosamine + acetate. Its pathway is glycolipid biosynthesis; lipid IV(A) biosynthesis; lipid IV(A) from (3R)-3-hydroxytetradecanoyl-[acyl-carrier-protein] and UDP-N-acetyl-alpha-D-glucosamine: step 2/6. Catalyzes the hydrolysis of UDP-3-O-myristoyl-N-acetylglucosamine to form UDP-3-O-myristoylglucosamine and acetate, the committed step in lipid A biosynthesis. This chain is UDP-3-O-acyl-N-acetylglucosamine deacetylase, found in Wigglesworthia glossinidia brevipalpis.